Here is a 417-residue protein sequence, read N- to C-terminus: Gamma-glutamyl phosphate reductase (417 aa).

Belongs to the gamma-glutamyl phosphate reductase family.

It localises to the cytoplasm. The catalysed reaction is L-glutamate 5-semialdehyde + phosphate + NADP(+) = L-glutamyl 5-phosphate + NADPH + H(+). It participates in amino-acid biosynthesis; L-proline biosynthesis; L-glutamate 5-semialdehyde from L-glutamate: step 2/2. Catalyzes the NADPH-dependent reduction of L-glutamate 5-phosphate into L-glutamate 5-semialdehyde and phosphate. The product spontaneously undergoes cyclization to form 1-pyrroline-5-carboxylate. The protein is Gamma-glutamyl phosphate reductase of Haemophilus influenzae (strain PittGG).